We begin with the raw amino-acid sequence, 542 residues long: CTP synthase (542 aa).

Positions 1–265 are amidoligase domain; sequence MARYVFITGG…DSEVLCAFGI (265 aa). Residue Ser13 coordinates CTP. A UTP-binding site is contributed by Ser13. An ATP-binding site is contributed by 14 to 19; the sequence is SLGKGI. Tyr54 contacts L-glutamine. Asp71 serves as a coordination point for ATP. Residues Asp71 and Glu139 each contribute to the Mg(2+) site. CTP contacts are provided by residues 146 to 148, 186 to 191, and Lys222; these read DIE and KTKPTQ. UTP-binding positions include 186 to 191 and Lys222; that span reads KTKPTQ. The Glutamine amidotransferase type-1 domain maps to 291–541; it reads TIAVVGKYTG…IEAAVEQSRL (251 aa). Ala353 contacts L-glutamine. Cys380 functions as the Nucleophile; for glutamine hydrolysis in the catalytic mechanism. L-glutamine-binding positions include 381-384, Glu404, and Arg469; that span reads FGMQ. Active-site residues include His514 and Glu516.

The protein belongs to the CTP synthase family. In terms of assembly, homotetramer.

It catalyses the reaction UTP + L-glutamine + ATP + H2O = CTP + L-glutamate + ADP + phosphate + 2 H(+). The enzyme catalyses L-glutamine + H2O = L-glutamate + NH4(+). It carries out the reaction UTP + NH4(+) + ATP = CTP + ADP + phosphate + 2 H(+). The protein operates within pyrimidine metabolism; CTP biosynthesis via de novo pathway; CTP from UDP: step 2/2. With respect to regulation, allosterically activated by GTP, when glutamine is the substrate; GTP has no effect on the reaction when ammonia is the substrate. The allosteric effector GTP functions by stabilizing the protein conformation that binds the tetrahedral intermediate(s) formed during glutamine hydrolysis. Inhibited by the product CTP, via allosteric rather than competitive inhibition. In terms of biological role, catalyzes the ATP-dependent amination of UTP to CTP with either L-glutamine or ammonia as the source of nitrogen. Regulates intracellular CTP levels through interactions with the four ribonucleotide triphosphates. This is CTP synthase from Bartonella tribocorum (strain CIP 105476 / IBS 506).